The chain runs to 211 residues: Riboflavin kinase (211 aa).

Residues 1–85 are H-T-H motif-like; that stretch reads MKKILMLIEL…CDKISNALSK (85 aa). The segment at 86–211 is riboflavin kinase; sequence GVIVGEVVSG…GDRVRLEVIQ (126 aa). 95-100 lines the CDP pocket; the sequence is GLGEGA. Mg(2+)-binding residues include T122 and N124. FMN-binding residues include T178 and E186. 191 to 194 contacts CDP; it reads VNLR.

This sequence belongs to the archaeal riboflavin kinase family. It depends on Mg(2+) as a cofactor.

It catalyses the reaction riboflavin + CTP = CDP + FMN + H(+). The protein operates within cofactor biosynthesis; FMN biosynthesis; FMN from riboflavin (CTP route): step 1/1. Its function is as follows. Catalyzes the CTP-dependent phosphorylation of riboflavin (vitamin B2) to form flavin mononucleotide (FMN). This is Riboflavin kinase (ribK) from Thermococcus kodakarensis (strain ATCC BAA-918 / JCM 12380 / KOD1) (Pyrococcus kodakaraensis (strain KOD1)).